A 193-amino-acid polypeptide reads, in one-letter code: Superoxide dismutase [Fe] (193 aa).

4 residues coordinate Fe cation: H27, H75, D159, and H163.

Belongs to the iron/manganese superoxide dismutase family. Homodimer. Requires Fe cation as cofactor.

The enzyme catalyses 2 superoxide + 2 H(+) = H2O2 + O2. Destroys superoxide anion radicals which are normally produced within the cells and which are toxic to biological systems. The sequence is that of Superoxide dismutase [Fe] (sodB) from Bacteroides fragilis (strain YCH46).